Here is a 465-residue protein sequence, read N- to C-terminus: GDNF family receptor alpha-2 (465 aa).

The signal sequence occupies residues methionine 1–alanine 21. Intrachain disulfides connect cysteine 40–cysteine 93, cysteine 47–cysteine 53, cysteine 63–cysteine 78, cysteine 95–cysteine 105, cysteine 159–cysteine 220, cysteine 166–cysteine 172, cysteine 183–cysteine 198, cysteine 193–cysteine 239, cysteine 222–cysteine 227, cysteine 249–cysteine 321, cysteine 256–cysteine 262, cysteine 273–cysteine 291, cysteine 283–cysteine 345, and cysteine 323–cysteine 333. N-linked (GlcNAc...) asparagine glycans are attached at residues asparagine 355, asparagine 387, and asparagine 412. Serine 445 carries GPI-anchor amidated serine lipidation. The propeptide at arginine 446–leucine 465 is removed in mature form.

It belongs to the GDNFR family. In terms of assembly, interacts with NRTN ligand and RET: forms a 2:2:2 ternary complex composed of NRTN ligand, GFRA2 and RET receptor.

Its subcellular location is the cell membrane. Receptor for neurturin (NRTN), a growth factor that supports the survival of sympathetic neurons. NRTN-binding leads to autophosphorylation and activation of the RET receptor. This chain is GDNF family receptor alpha-2 (GFRA2), found in Gallus gallus (Chicken).